The chain runs to 332 residues: NADH-quinone oxidoreductase subunit H (332 aa).

A run of 9 helical transmembrane segments spans residues 4 to 24 (FAFF…IFAS), 44 to 64 (IGPD…MIKL), 78 to 98 (FIFA…LAAI), 120 to 140 (VALL…FLGG), 165 to 185 (VGAL…LVDI), 194 to 214 (FSWL…ALFI), 255 to 275 (IAGA…FWII), 279 to 299 (IMMI…RAAF), and 312 to 332 (YLIL…TVLL).

It belongs to the complex I subunit 1 family. In terms of assembly, NDH-1 is composed of 14 different subunits. Subunits NuoA, H, J, K, L, M, N constitute the membrane sector of the complex.

The protein localises to the cell inner membrane. The catalysed reaction is a quinone + NADH + 5 H(+)(in) = a quinol + NAD(+) + 4 H(+)(out). NDH-1 shuttles electrons from NADH, via FMN and iron-sulfur (Fe-S) centers, to quinones in the respiratory chain. The immediate electron acceptor for the enzyme in this species is believed to be ubiquinone. Couples the redox reaction to proton translocation (for every two electrons transferred, four hydrogen ions are translocated across the cytoplasmic membrane), and thus conserves the redox energy in a proton gradient. This subunit may bind ubiquinone. The polypeptide is NADH-quinone oxidoreductase subunit H (Campylobacter jejuni subsp. jejuni serotype O:23/36 (strain 81-176)).